A 521-amino-acid chain; its full sequence is Maturase K (521 aa).

Belongs to the intron maturase 2 family. MatK subfamily.

It is found in the plastid. It localises to the chloroplast. Its function is as follows. Usually encoded in the trnK tRNA gene intron. Probably assists in splicing its own and other chloroplast group II introns. This is Maturase K from Kniphofia uvaria (Red-hot poker).